Here is a 266-residue protein sequence, read N- to C-terminus: UPF0328 protein ECU03_0130 (266 aa).

It belongs to the UPF0328 family.

The protein is UPF0328 protein ECU03_0130 of Encephalitozoon cuniculi (strain GB-M1) (Microsporidian parasite).